A 378-amino-acid polypeptide reads, in one-letter code: Glutamate 5-kinase (378 aa).

Residue Lys20 participates in ATP binding. Substrate is bound by residues Ser60, Asp147, and Asn159. Residues 179-180 and 221-227 contribute to the ATP site; these read TD and TGGMLTK. The PUA domain maps to 286-364; it reads RGRVVLDDGA…SQIARILGSM (79 aa).

Belongs to the glutamate 5-kinase family.

The protein resides in the cytoplasm. The enzyme catalyses L-glutamate + ATP = L-glutamyl 5-phosphate + ADP. Its pathway is amino-acid biosynthesis; L-proline biosynthesis; L-glutamate 5-semialdehyde from L-glutamate: step 1/2. Its function is as follows. Catalyzes the transfer of a phosphate group to glutamate to form L-glutamate 5-phosphate. The sequence is that of Glutamate 5-kinase from Bordetella pertussis (strain Tohama I / ATCC BAA-589 / NCTC 13251).